Consider the following 122-residue polypeptide: uncharacterized protein (122 aa).

It localises to the mitochondrion. This is an uncharacterized protein from Arabidopsis thaliana (Mouse-ear cress).